A 545-amino-acid polypeptide reads, in one-letter code: Chaperonin GroEL 2 (545 aa).

Residues 30-33 (TLGP), Lys-51, 87-91 (DGTTT), Gly-415, and Asp-496 contribute to the ATP site.

The protein belongs to the chaperonin (HSP60) family. As to quaternary structure, forms a cylinder of 14 subunits composed of two heptameric rings stacked back-to-back. Interacts with the co-chaperonin GroES.

The protein localises to the cytoplasm. It carries out the reaction ATP + H2O + a folded polypeptide = ADP + phosphate + an unfolded polypeptide.. Functionally, together with its co-chaperonin GroES, plays an essential role in assisting protein folding. The GroEL-GroES system forms a nano-cage that allows encapsulation of the non-native substrate proteins and provides a physical environment optimized to promote and accelerate protein folding. This Nitrobacter winogradskyi (strain ATCC 25391 / DSM 10237 / CIP 104748 / NCIMB 11846 / Nb-255) protein is Chaperonin GroEL 2.